The following is a 412-amino-acid chain: cAMP-dependent protein kinase regulatory subunit (412 aa).

The segment covering Met-1–Pro-11 has biased composition (polar residues). Residues Met-1 to Glu-146 are disordered. The span at Ser-16–Ala-29 shows a compositional bias: basic and acidic residues. The interval Ser-23 to Phe-159 is dimerization and phosphorylation. 2 stretches are compositionally biased toward polar residues: residues Asn-49–Leu-60 and Thr-119–Pro-138. The residue at position 120 (Ser-120) is a Phosphoserine. Residues Leu-160–Pro-291, Glu-238, Arg-247, Leu-292–Ser-405, Glu-359, and Arg-368 each bind 3',5'-cyclic AMP.

This sequence belongs to the cAMP-dependent kinase regulatory chain family. As to quaternary structure, tetramer, composed of 2 regulatory (R) and 2 catalytic (C) subunits. In the presence of cAMP it dissociates into 2 active monomeric C subunits and an R dimer.

The chain is cAMP-dependent protein kinase regulatory subunit (pkaR) from Emericella nidulans (strain FGSC A4 / ATCC 38163 / CBS 112.46 / NRRL 194 / M139) (Aspergillus nidulans).